Here is a 120-residue protein sequence, read N- to C-terminus: Kidney androgen-regulated protein (120 aa).

A signal peptide spans 1–18; the sequence is MMICKVLVITVFCVLTVA.

The protein resides in the secreted. The polypeptide is Kidney androgen-regulated protein (Kap) (Rattus norvegicus (Rat)).